Reading from the N-terminus, the 229-residue chain is Urease accessory protein UreF (229 aa).

The protein belongs to the UreF family. In terms of assembly, ureD, UreF and UreG form a complex that acts as a GTP-hydrolysis-dependent molecular chaperone, activating the urease apoprotein by helping to assemble the nickel containing metallocenter of UreC. The UreE protein probably delivers the nickel.

The protein resides in the cytoplasm. Its function is as follows. Required for maturation of urease via the functional incorporation of the urease nickel metallocenter. This Ralstonia pickettii (strain 12J) protein is Urease accessory protein UreF.